Here is a 783-residue protein sequence, read N- to C-terminus: Protein phosphatase 2C 29 (783 aa).

Positions 151-194 (SFSALPLQPGPDRSGLFMSGPIERGATSGPLDPPAGEISRSNSA) are disordered. Position 199 is a phosphoserine (S199). The PPM-type phosphatase domain maps to 260-770 (SSGENDLQWA…DDCTVLVIAL (511 aa)). Residues D295 and G296 each contribute to the Mn(2+) site. Residues 555–595 (ETGESVETAERVEERRNDLDRDDGNKEPLVVDSSDSTVNNE) form a disordered region. A compositionally biased stretch (basic and acidic residues) spans 562 to 580 (TAERVEERRNDLDRDDGNK). Residues D701 and D761 each coordinate Mn(2+).

This sequence belongs to the PP2C family. Requires Mg(2+) as cofactor. It depends on Mn(2+) as a cofactor. Expressed in roots, leaves, stems, inflorescences, flowers and developing vascular tissue.

The protein localises to the nucleus. It carries out the reaction O-phospho-L-seryl-[protein] + H2O = L-seryl-[protein] + phosphate. The enzyme catalyses O-phospho-L-threonyl-[protein] + H2O = L-threonyl-[protein] + phosphate. Functionally, involved in the regulation of pedicel length and of CLAVATA pathways controlling stem cell identity at shoot and flower meristems. The protein is Protein phosphatase 2C 29 (PLL1) of Arabidopsis thaliana (Mouse-ear cress).